Here is a 108-residue protein sequence, read N- to C-terminus: Large ribosomal subunit protein bL31B (108 aa).

The segment at Ala-88–Lys-108 is disordered. Residues Lys-97–Lys-108 show a composition bias toward basic residues.

It belongs to the bacterial ribosomal protein bL31 family. Type B subfamily. As to quaternary structure, part of the 50S ribosomal subunit.

The chain is Large ribosomal subunit protein bL31B from Chlamydia abortus (strain DSM 27085 / S26/3) (Chlamydophila abortus).